Reading from the N-terminus, the 716-residue chain is Fatty acid oxidation complex subunit alpha (716 aa).

The segment at 1–189 (MIYQSPTIQV…KVGAVDAVVA (189 aa)) is enoyl-CoA hydratase/isomerase. Residue Asp-296 participates in substrate binding. A 3-hydroxyacyl-CoA dehydrogenase region spans residues 311–716 (KDVKSAAVLG…AANNGSYYQA (406 aa)). Residues Met-324, Asp-343, 400-402 (VVE), Lys-407, and Ser-429 contribute to the NAD(+) site. His-450 serves as the catalytic For 3-hydroxyacyl-CoA dehydrogenase activity. NAD(+) is bound at residue Asn-453. Residues Asn-500 and Tyr-660 each coordinate substrate.

It in the N-terminal section; belongs to the enoyl-CoA hydratase/isomerase family. The protein in the C-terminal section; belongs to the 3-hydroxyacyl-CoA dehydrogenase family. As to quaternary structure, heterotetramer of two alpha chains (FadB) and two beta chains (FadA).

It catalyses the reaction a (3S)-3-hydroxyacyl-CoA + NAD(+) = a 3-oxoacyl-CoA + NADH + H(+). The catalysed reaction is a (3S)-3-hydroxyacyl-CoA = a (2E)-enoyl-CoA + H2O. It carries out the reaction a 4-saturated-(3S)-3-hydroxyacyl-CoA = a (3E)-enoyl-CoA + H2O. The enzyme catalyses (3S)-3-hydroxybutanoyl-CoA = (3R)-3-hydroxybutanoyl-CoA. It catalyses the reaction a (3Z)-enoyl-CoA = a 4-saturated (2E)-enoyl-CoA. The catalysed reaction is a (3E)-enoyl-CoA = a 4-saturated (2E)-enoyl-CoA. The protein operates within lipid metabolism; fatty acid beta-oxidation. Functionally, involved in the aerobic and anaerobic degradation of long-chain fatty acids via beta-oxidation cycle. Catalyzes the formation of 3-oxoacyl-CoA from enoyl-CoA via L-3-hydroxyacyl-CoA. It can also use D-3-hydroxyacyl-CoA and cis-3-enoyl-CoA as substrate. This is Fatty acid oxidation complex subunit alpha from Shewanella sp. (strain ANA-3).